Reading from the N-terminus, the 2155-residue chain is Alpha-tectorin (2155 aa).

A signal peptide spans 1 to 22; it reads MNYSSFLRIWVSFIFALVQHQA. N-linked (GlcNAc...) asparagine glycans are attached at residues Asn-34, Asn-187, Asn-215, Asn-278, Asn-455, Asn-506, Asn-528, and Asn-560. One can recognise an NIDO domain in the interval 98–252; sequence PFWADVHNGI…GRWAFKVDGK (155 aa). In terms of domain architecture, VWFC spans 260 to 314; the sequence is CTSRGQFLRRGEVFWDDLNCTVKCRCLDFNNEIYCQEASCSPYEVCEPKGKFFYC. The region spanning 320–500 is the VWFD 1 domain; it reads STCVVFGEPH…RVYHADWKCD (181 aa). 2 disulfide bridges follow: Cys-322-Cys-461 and Cys-344-Cys-499. Residues 597–650 form the TIL 1 domain; it reads CPSFSHYSVCTSSCPDTCSDLTASRNCATPCTEGCECNQGFVLSTSQCVPLHKC. 9 N-linked (GlcNAc...) asparagine glycosylation sites follow: Asn-670, Asn-687, Asn-813, Asn-843, Asn-855, Asn-898, Asn-920, Asn-931, and Asn-949. A VWFD 2 domain is found at 711–886; that stretch reads TVCLLSQNQV…SWTTFEEICN (176 aa). Cys-713 and Cys-849 are joined by a disulfide. In terms of domain architecture, TIL 2 spans 984–1036; it reads CPENSHFEECITCTETCETLTLGPICVDSCSEGCQCDEGYALLGSQCVTRSEC. N-linked (GlcNAc...) asparagine glycans are attached at residues Asn-1048, Asn-1235, and Asn-1364. The region spanning 1098 to 1278 is the VWFD 3 domain; the sequence is ASCIVSGYGH…SWVKRDTFCQ (181 aa). 2 cysteine pairs are disulfide-bonded: Cys-1100–Cys-1241 and Cys-1122–Cys-1277. Positions 1372–1425 constitute a TIL 3 domain; that stretch reads CPPNSHYESCVSVCQPRCAAIRLKSDCSHYCVEGCHCDAGYVLNGKSCILPHSC. The VWFD 4 domain occupies 1485-1666; it reads SYCLAAGGGV…QKRPLAPSCN (182 aa). 7 cysteine pairs are disulfide-bonded: Cys-1487–Cys-1622, Cys-1509–Cys-1665, Cys-1717–Cys-1775, Cys-1741–Cys-1784, Cys-1786–Cys-1818, Cys-1806–Cys-1898, and Cys-1837–Cys-1857. Asn-1538, Asn-1565, Asn-1756, Asn-1772, Asn-1794, Asn-1851, Asn-1864, Asn-1880, Asn-1920, and Asn-1939 each carry an N-linked (GlcNAc...) asparagine glycan. One can recognise a ZP domain in the interval 1805–2059; sequence TCKAAQMEVS…YSCKITCPHN (255 aa). Disulfide bonds link Cys-1980–Cys-2040, Cys-2001–Cys-2056, and Cys-2045–Cys-2052. Asn-2091 carries the GPI-anchor amidated asparagine lipid modification. Positions 2092 to 2155 are cleaved as a propeptide — removed in mature form; it reads GGCEQICTSR…HFVYKSGTTS (64 aa).

As to quaternary structure, may form homomeric filament after self-association or heteromeric filament after association with beta-tectorin. Interacts with CEACAM16. In terms of processing, the presence of a hydrophobic C-terminus preceded by a potential cleavage site strongly suggests that tectorins are synthesized as glycosylphosphatidylinositol-linked, membrane-bound precursors. Tectorins are targeted to the apical surface of the inner ear epithelia by the lipid and proteolytically released into the extracellular compartment.

It is found in the cell membrane. It localises to the secreted. The protein localises to the extracellular space. The protein resides in the extracellular matrix. Its function is as follows. One of the major non-collagenous components of the tectorial membrane. The tectorial membrane is an extracellular matrix of the inner ear that covers the neuroepithelium of the cochlea and contacts the stereocilia bundles of specialized sensory hair cells. Sound induces movement of these hair cells relative to the tectorial membrane, deflects the stereocilia and leads to fluctuations in hair-cell membrane potential, transducing sound into electrical signals. The protein is Alpha-tectorin (TECTA) of Homo sapiens (Human).